The chain runs to 365 residues: Flagellar P-ring protein (365 aa).

The signal sequence occupies residues 1-21 (MIKRIISIVFLLLTLPQLALA).

This sequence belongs to the FlgI family. In terms of assembly, the basal body constitutes a major portion of the flagellar organelle and consists of four rings (L,P,S, and M) mounted on a central rod.

It is found in the periplasm. It localises to the bacterial flagellum basal body. In terms of biological role, assembles around the rod to form the L-ring and probably protects the motor/basal body from shearing forces during rotation. This is Flagellar P-ring protein from Geobacter metallireducens (strain ATCC 53774 / DSM 7210 / GS-15).